Reading from the N-terminus, the 346-residue chain is Biotin synthase (346 aa).

The Radical SAM core domain occupies 38–256 (QQVQVSTLLS…IAVARIMMPT (219 aa)). Positions 53, 57, and 60 each coordinate [4Fe-4S] cluster. The [2Fe-2S] cluster site is built by Cys97, Cys128, Cys188, and Arg260.

It belongs to the radical SAM superfamily. Biotin synthase family. In terms of assembly, homodimer. The cofactor is [4Fe-4S] cluster. Requires [2Fe-2S] cluster as cofactor.

The catalysed reaction is (4R,5S)-dethiobiotin + (sulfur carrier)-SH + 2 reduced [2Fe-2S]-[ferredoxin] + 2 S-adenosyl-L-methionine = (sulfur carrier)-H + biotin + 2 5'-deoxyadenosine + 2 L-methionine + 2 oxidized [2Fe-2S]-[ferredoxin]. The protein operates within cofactor biosynthesis; biotin biosynthesis; biotin from 7,8-diaminononanoate: step 2/2. Functionally, catalyzes the conversion of dethiobiotin (DTB) to biotin by the insertion of a sulfur atom into dethiobiotin via a radical-based mechanism. The chain is Biotin synthase from Salmonella dublin (strain CT_02021853).